A 651-amino-acid polypeptide reads, in one-letter code: Intraflagellar transport protein 70A (651 aa).

TPR repeat units follow at residues 8-41, 42-75, 140-173, 175-207, 372-405, 410-443, and 445-478; these read DGEY…QYRS, RAGL…SPEV, PESE…MGYK, DLSF…GIRE, LTEQ…YDET, IPVL…CNEH, and IWKL…HYDN. Residues 494–521 are a coiled coil; the sequence is YIMTSQNEEAEELMRKIEKEEEQIAYEN. The TPR 8 repeat unit spans residues 530 to 563; that stretch reads CIVNLVIGTLYCAKGNYEFGISRVIKSLEPYNKK.

It belongs to the TTC30/dfy-1/fleer family.

The protein resides in the cell projection. The protein localises to the cilium. Its function is as follows. Required for polyglutamylation of axonemal tubulin. Plays a role in anterograde intraflagellar transport (IFT), the process by which cilia precursors are transported from the base of the cilium to the site of their incorporation at the tip. This chain is Intraflagellar transport protein 70A (ift70a), found in Xenopus laevis (African clawed frog).